The primary structure comprises 177 residues: Protein CutA 1, chloroplastic (177 aa).

A chloroplast-targeting transit peptide spans 1–60; sequence MPLLPSPLGSLSAAATAAPRRAAAAAGLSPLLLRRRAPIAGALLFLSLGAFAGVRSLSSS.

This sequence belongs to the CutA family. As to quaternary structure, homotrimer.

The protein resides in the plastid. It is found in the chloroplast. The chain is Protein CutA 1, chloroplastic (CUTA1) from Oryza sativa subsp. japonica (Rice).